We begin with the raw amino-acid sequence, 1029 residues long: E3 ubiquitin-protein ligase UPL6 (1029 aa).

Residues 1–20 (MFFSGDPSTRKRVDLGGRST) form a disordered region. Positions 8 to 20 (STRKRVDLGGRST) are enriched in basic and acidic residues. One can recognise an IQ domain in the interval 45 to 74 (QNSAALKIQKFFRGRRSMAIERSKVRHDFC). Residues 688-1029 (SEDDLRSSIR…ISAEAGFDLS (342 aa)) enclose the HECT domain. The Glycyl thioester intermediate role is filled by cysteine 997.

It belongs to the UPL family.

The enzyme catalyses S-ubiquitinyl-[E2 ubiquitin-conjugating enzyme]-L-cysteine + [acceptor protein]-L-lysine = [E2 ubiquitin-conjugating enzyme]-L-cysteine + N(6)-ubiquitinyl-[acceptor protein]-L-lysine.. It functions in the pathway protein modification; protein ubiquitination. Probable E3 ubiquitin-protein ligase which mediates ubiquitination and subsequent proteasomal degradation of target proteins. This chain is E3 ubiquitin-protein ligase UPL6 (UPL6), found in Arabidopsis thaliana (Mouse-ear cress).